The sequence spans 559 residues: Mercuric reductase (559 aa).

The 64-residue stretch at 1–64 (MYLNITGMTC…AVAGLGYKAT (64 aa)) folds into the HMA domain. Residues cysteine 10 and cysteine 13 each contribute to the a metal cation site. Residues alanine 108, glycine 128, and threonine 133 each coordinate FAD. The cysteines at positions 134 and 139 are disulfide-linked. FAD is bound by residues lysine 143, alanine 209, aspartate 401, and valine 409. Hg(2+) is bound by residues cysteine 556 and cysteine 557.

The protein belongs to the class-I pyridine nucleotide-disulfide oxidoreductase family. As to quaternary structure, homodimer. The cofactor is FAD.

The catalysed reaction is Hg + NADP(+) + H(+) = Hg(2+) + NADPH. Resistance to Hg(2+) in bacteria appears to be governed by a specialized system which includes mercuric reductase. MerA protein is responsible for volatilizing mercury as Hg(0). The polypeptide is Mercuric reductase (merA) (Alcaligenes sp).